Here is a 778-residue protein sequence, read N- to C-terminus: pH-response regulator protein palH/prr-4 (778 aa).

Topologically, residues 1-108 (MEPRQLFSDP…DPFYASTFPQ (108 aa)) are extracellular. A helical transmembrane segment spans residues 109–129 (CYALAATTIIAYTLVIMLFIT). The Periplasmic segment spans residues 130 to 160 (PRSFLDGGVVVLGRKGFTNGGGGTSIGGRPW). The chain crosses the membrane as a helical span at residues 161–181 (LQKVAALSVAISLTIANAATF). Residues 182 to 201 (RAAEQQYSWGVQNAKQLQED) are Extracellular-facing. A helical transmembrane segment spans residues 202 to 222 (VLGGAELKIIRIISDTFLWLA). Residues 223 to 237 (QAQTLIRLFPRQREK) lie on the Periplasmic side of the membrane. A helical transmembrane segment spans residues 238–258 (VIIKWTAFALITLDVIFQSLN). Residues 259–275 (SFKYGGSDLTRPKFTEA) lie on the Extracellular side of the membrane. A helical membrane pass occupies residues 276–296 (VPALSYLFALALGVLYAAWVL). Residues 297 to 314 (YYSIMKKRYAFYHPLMKN) lie on the Periplasmic side of the membrane. A helical transmembrane segment spans residues 315 to 335 (MILVAVLSVVSILVPVVFFIL). Topologically, residues 336 to 341 (DISKPD) are extracellular. A helical transmembrane segment spans residues 342-362 (FAGWGDYVRWVGAAAASVIVW). Over 363–778 (EWVERIEALE…RSDSSTTPSP (416 aa)) the chain is Periplasmic. Disordered regions lie at residues 394–499 (ASQS…DTTS), 514–605 (ELTS…DENS), and 660–778 (ELNH…TPSP). Basic and acidic residues predominate over residues 446–456 (HRTEPSSRNEP). Polar residues predominate over residues 457–466 (NEGSSPVAET). Basic and acidic residues-rich tracts occupy residues 588-605 (FVTRSEPRSSKMQRDENS) and 661-675 (LNHSSREGTVREESR). Residues 720 to 732 (PIVTQGSFTNNRY) are compositionally biased toward polar residues. Residues 749–759 (ARAPSQPQSPS) show a composition bias toward low complexity. Residues 769–778 (RSDSSTTPSP) show a composition bias toward polar residues.

It belongs to the palH/RIM21 family.

It is found in the cell membrane. Its function is as follows. Required for the proteolytic cleavage of the transcription factor pacc-1 in response to alkaline ambient pH. This is pH-response regulator protein palH/prr-4 (prr-4) from Neurospora crassa (strain ATCC 24698 / 74-OR23-1A / CBS 708.71 / DSM 1257 / FGSC 987).